A 167-amino-acid polypeptide reads, in one-letter code: Transcription antitermination protein NusB (167 aa).

The tract at residues 1–21 is disordered; sequence MIPTDTAPPSKPAQGHKGYKN.

The protein belongs to the NusB family.

Involved in transcription antitermination. Required for transcription of ribosomal RNA (rRNA) genes. Binds specifically to the boxA antiterminator sequence of the ribosomal RNA (rrn) operons. The protein is Transcription antitermination protein NusB of Nitrosomonas eutropha (strain DSM 101675 / C91 / Nm57).